Consider the following 378-residue polypeptide: Cytochrome b (378 aa).

A run of 4 helical transmembrane segments spans residues 33-53 (FGSLLGLCLVAQILTGLFLAM), 77-98 (WLIRNLHANGASFFFLCLYLHI), 113-133 (WNTGILLLLLIMVTAFVGYVL), and 178-198 (FFAFHFFIPFIATAVVALHFL). Residues His-83 and His-97 each contribute to the heme b site. His-182 and His-196 together coordinate heme b. Residue His-201 participates in a ubiquinone binding. Transmembrane regions (helical) follow at residues 226 to 246 (YKDLLGFLLLLAPLTALAVFS), 288 to 308 (LGGVLALLASILVLAVVPFLH), 320 to 340 (WSQLCLFTLVVTVLILTWIGG), and 347 to 367 (LTTVGQIASLLYFTIILFLMP).

This sequence belongs to the cytochrome b family. In terms of assembly, the cytochrome bc1 complex contains 3 respiratory subunits (MT-CYB, CYC1 and UQCRFS1), 2 core proteins (UQCRC1 and UQCRC2) and probably 6 low-molecular weight proteins. Heme b serves as cofactor.

The protein localises to the mitochondrion inner membrane. Component of the ubiquinol-cytochrome c reductase complex (complex III or cytochrome b-c1 complex) that is part of the mitochondrial respiratory chain. The b-c1 complex mediates electron transfer from ubiquinol to cytochrome c. Contributes to the generation of a proton gradient across the mitochondrial membrane that is then used for ATP synthesis. The protein is Cytochrome b (mt-cyb) of Indostomus paradoxus (Armoured stickleback).